The chain runs to 368 residues: UDP-N-acetylglucosamine--N-acetylmuramyl-(pentapeptide) pyrophosphoryl-undecaprenol N-acetylglucosamine transferase (368 aa).

UDP-N-acetyl-alpha-D-glucosamine contacts are provided by residues 14–16, Asn-125, Arg-168, Ser-196, and Gln-297; that span reads TGG.

The protein belongs to the glycosyltransferase 28 family. MurG subfamily.

Its subcellular location is the cell inner membrane. The catalysed reaction is di-trans,octa-cis-undecaprenyl diphospho-N-acetyl-alpha-D-muramoyl-L-alanyl-D-glutamyl-meso-2,6-diaminopimeloyl-D-alanyl-D-alanine + UDP-N-acetyl-alpha-D-glucosamine = di-trans,octa-cis-undecaprenyl diphospho-[N-acetyl-alpha-D-glucosaminyl-(1-&gt;4)]-N-acetyl-alpha-D-muramoyl-L-alanyl-D-glutamyl-meso-2,6-diaminopimeloyl-D-alanyl-D-alanine + UDP + H(+). Its pathway is cell wall biogenesis; peptidoglycan biosynthesis. Cell wall formation. Catalyzes the transfer of a GlcNAc subunit on undecaprenyl-pyrophosphoryl-MurNAc-pentapeptide (lipid intermediate I) to form undecaprenyl-pyrophosphoryl-MurNAc-(pentapeptide)GlcNAc (lipid intermediate II). This Nitrobacter winogradskyi (strain ATCC 25391 / DSM 10237 / CIP 104748 / NCIMB 11846 / Nb-255) protein is UDP-N-acetylglucosamine--N-acetylmuramyl-(pentapeptide) pyrophosphoryl-undecaprenol N-acetylglucosamine transferase.